The chain runs to 599 residues: Zinc metalloproteinase dpy-31 (599 aa).

Positions M1–G22 are cleaved as a signal peptide. Positions R23–K211 are excised as a propeptide. The 200-residue stretch at K211 to S410 folds into the Peptidase M12A domain. N251 carries N-linked (GlcNAc...) asparagine glycosylation. Cystine bridges form between C254–C409, C277–C298, C413–C433, C435–C444, and C455–C483. H306 is a Zn(2+) binding site. E307 is an active-site residue. Residues H310 and H316 each coordinate Zn(2+). Residues N405–E445 enclose the EGF-like domain. One can recognise a CUB domain in the interval C455–L571. The N-linked (GlcNAc...) asparagine glycan is linked to N522.

It depends on Zn(2+) as a cofactor.

The protein resides in the secreted. Its activity is regulated as follows. Inhibited by marimastat and tripeptide hydroxamic acids. Metalloprotease which cleaves the carboxyl terminus of procollagens to mature collagens. Probably involved in cuticular collagen maturation. This is Zinc metalloproteinase dpy-31 from Brugia malayi (Filarial nematode worm).